Reading from the N-terminus, the 302-residue chain is Glycine--tRNA ligase alpha subunit (302 aa).

The protein belongs to the class-II aminoacyl-tRNA synthetase family. As to quaternary structure, tetramer of two alpha and two beta subunits.

Its subcellular location is the cytoplasm. The catalysed reaction is tRNA(Gly) + glycine + ATP = glycyl-tRNA(Gly) + AMP + diphosphate. This Haemophilus influenzae (strain 86-028NP) protein is Glycine--tRNA ligase alpha subunit.